The primary structure comprises 156 residues: Gene 55 protein (156 aa).

The tract at residues Lys-132–Glu-156 is disordered.

The chain is Gene 55 protein (55) from Mycobacterium phage L5 (Mycobacteriophage L5).